The following is a 381-amino-acid chain: Spermidine/putrescine import ATP-binding protein PotA (381 aa).

Residues 22–252 form the ABC transporter domain; it reads VELRNVFKFF…PKTSFVADFI (231 aa). An ATP-binding site is contributed by 54-61; sequence GPSGCGKT.

It belongs to the ABC transporter superfamily. Spermidine/putrescine importer (TC 3.A.1.11.1) family. The complex is composed of two ATP-binding proteins (PotA), two transmembrane proteins (PotB and PotC) and a solute-binding protein (PotD).

It is found in the cell inner membrane. It carries out the reaction ATP + H2O + polyamine-[polyamine-binding protein]Side 1 = ADP + phosphate + polyamineSide 2 + [polyamine-binding protein]Side 1.. Functionally, part of the ABC transporter complex PotABCD involved in spermidine/putrescine import. Responsible for energy coupling to the transport system. The protein is Spermidine/putrescine import ATP-binding protein PotA of Trichormus variabilis (strain ATCC 29413 / PCC 7937) (Anabaena variabilis).